A 226-amino-acid polypeptide reads, in one-letter code: 7-cyano-7-deazaguanine synthase (226 aa).

10–20 contributes to the ATP binding site; that stretch reads FSGGQDSTTLA. Zn(2+) contacts are provided by Cys190, Cys205, Cys208, and Cys211.

This sequence belongs to the QueC family. Requires Zn(2+) as cofactor.

It carries out the reaction 7-carboxy-7-deazaguanine + NH4(+) + ATP = 7-cyano-7-deazaguanine + ADP + phosphate + H2O + H(+). It functions in the pathway purine metabolism; 7-cyano-7-deazaguanine biosynthesis. In terms of biological role, catalyzes the ATP-dependent conversion of 7-carboxy-7-deazaguanine (CDG) to 7-cyano-7-deazaguanine (preQ(0)). This Helicobacter pylori (strain Shi470) protein is 7-cyano-7-deazaguanine synthase.